Reading from the N-terminus, the 618-residue chain is Glucose starvation modulator protein 1 (618 aa).

Positions 20 to 48 (CEFCHTKHIQCDVGRPCQNCLKRNIGKFC) form a DNA-binding region, zn(2)-C6 fungal-type. Residues 325 to 352 (ANANTHPSHNAKLESECDSSSHSDADLE) form a disordered region. A compositionally biased stretch (basic and acidic residues) spans 335 to 352 (AKLESECDSSSHSDADLE). The PAS domain maps to 466–538 (LLDLENMAKL…QIFNELLAFG (73 aa)).

Belongs to the ERT1/acuK family.

The protein resides in the nucleus. Its function is as follows. Transcription factor which regulates nonfermentable carbon utilization. Binds specifically to 5'-CGGN(8)CGG-3' and 5'-CGGN(9)CGG-3' sequences in the promoter region. The polypeptide is Glucose starvation modulator protein 1 (GSM1) (Saccharomyces cerevisiae (strain ATCC 204508 / S288c) (Baker's yeast)).